The following is a 125-amino-acid chain: Large ribosomal subunit protein bL12 (125 aa).

Belongs to the bacterial ribosomal protein bL12 family. Homodimer. Part of the ribosomal stalk of the 50S ribosomal subunit. Forms a multimeric L10(L12)X complex, where L10 forms an elongated spine to which 2 to 4 L12 dimers bind in a sequential fashion. Binds GTP-bound translation factors.

Its function is as follows. Forms part of the ribosomal stalk which helps the ribosome interact with GTP-bound translation factors. Is thus essential for accurate translation. This Azorhizobium caulinodans (strain ATCC 43989 / DSM 5975 / JCM 20966 / LMG 6465 / NBRC 14845 / NCIMB 13405 / ORS 571) protein is Large ribosomal subunit protein bL12.